The sequence spans 643 residues: uncharacterized protein (643 aa).

The span at 179–199 (FKSSQLQQSPSPNKKSPSYSQ) shows a compositional bias: low complexity. 2 disordered regions span residues 179 to 200 (FKSSQLQQSPSPNKKSPSYSQV) and 349 to 377 (KRSNSIDRAGIRSRRRSHSSPERSTSTEN).

This is an uncharacterized protein from Caenorhabditis elegans.